A 412-amino-acid polypeptide reads, in one-letter code: Cytochrome p450 CYP199A2 (412 aa).

Substrate is bound by residues Arg-94 to Ser-97 and Ser-247. Cys-361 serves as a coordination point for heme.

This sequence belongs to the cytochrome P450 family. Interacts with the ferredoxin-like iron-sulfur protein ThcC. Requires heme as cofactor.

Its subcellular location is the cytoplasm. It catalyses the reaction 4-methoxybenzoate + AH2 + O2 = 4-hydroxybenzoate + formaldehyde + A + H2O. In terms of biological role, the oxidative demethylation of 4-methoxybenzoate requires the participation of the monooxygenase CYP199A2, the ferredoxin-like protein ThcC/RPA1872 and a ferredoxin reductase to mediate the transfer of electrons from NADH to CYP199A2. It is also active with 4-ethylbenzoate. The protein is Cytochrome p450 CYP199A2 of Rhodopseudomonas palustris (strain ATCC BAA-98 / CGA009).